The following is a 37-amino-acid chain: U10-ctenitoxin-Co1a (37 aa).

4 cysteine pairs are disulfide-bonded: Cys-2-Cys-17, Cys-9-Cys-22, Cys-16-Cys-33, and Cys-24-Cys-31.

In terms of tissue distribution, expressed by the venom gland.

It is found in the secreted. In terms of biological role, antagonist of L-type calcium channels (Cav1/CACNA1). This chain is U10-ctenitoxin-Co1a, found in Ctenus ornatus (Brazilian spider).